A 75-amino-acid chain; its full sequence is Exodeoxyribonuclease 7 small subunit (75 aa).

This sequence belongs to the XseB family. Heterooligomer composed of large and small subunits.

It is found in the cytoplasm. The catalysed reaction is Exonucleolytic cleavage in either 5'- to 3'- or 3'- to 5'-direction to yield nucleoside 5'-phosphates.. Functionally, bidirectionally degrades single-stranded DNA into large acid-insoluble oligonucleotides, which are then degraded further into small acid-soluble oligonucleotides. This Caldanaerobacter subterraneus subsp. tengcongensis (strain DSM 15242 / JCM 11007 / NBRC 100824 / MB4) (Thermoanaerobacter tengcongensis) protein is Exodeoxyribonuclease 7 small subunit.